Reading from the N-terminus, the 715-residue chain is Lactococcin-A transport/processing ATP-binding protein LcnC (715 aa).

The Peptidase C39 domain maps to 11 to 138 (QVDEMDCGCA…SEWTGISLFL (128 aa)). Cys17 is an active-site residue. 6 helical membrane passes run 167 to 187 (VILN…LGSY), 197 to 217 (IPNA…LTYI), 237 to 257 (LAID…MSFF), 282 to 302 (TILS…ILGL), 307 to 327 (LFLL…IFTP), and 396 to 416 (AIIQ…LVIS). Residues 168 to 450 (ILNIVIASFI…IINLQTKLQK (283 aa)) form the ABC transmembrane type-1 domain. One can recognise an ABC transporter domain in the interval 482–715 (LNMSDISYQY…NGFYEQLYHN (234 aa)). 515 to 522 (GMSGSGKS) lines the ATP pocket.

The protein belongs to the ABC transporter superfamily. Bacteriocin (lactococcin) exporter (TC 3.A.1.112.3) family.

Its subcellular location is the cell membrane. Functionally, involved in the export process of the bacteriocin lactococcin A. This is Lactococcin-A transport/processing ATP-binding protein LcnC (lcnC) from Lactococcus lactis subsp. lactis (Streptococcus lactis).